The following is a 223-amino-acid chain: Probable GTP-binding protein EngB (223 aa).

An EngB-type G domain is found at Met49–Asp223. Residues Gly57–Ser64, Gly84–Gln88, Asp102–Gly105, Thr169–Asp172, and Thr203–Ser205 each bind GTP. Mg(2+)-binding residues include Ser64 and Thr86.

The protein belongs to the TRAFAC class TrmE-Era-EngA-EngB-Septin-like GTPase superfamily. EngB GTPase family. Mg(2+) is required as a cofactor.

Its function is as follows. Necessary for normal cell division and for the maintenance of normal septation. In Granulibacter bethesdensis (strain ATCC BAA-1260 / CGDNIH1), this protein is Probable GTP-binding protein EngB.